The following is a 190-amino-acid chain: MPYGKIEDIKTSGASDVTAAQDGLKEGGWKSSHRMAEIDSNRMENYRTIINEAGRQCDVDPAVIAGIISRESRAGNQLINGWGDHGKAFGLMQIDVTPPPNGGGHTPVGTWDSLEHLIQATEILVEFIERIKTKFPRWNADQHLKGALAAYNKGEKNVESYASVDAKTTGKDYSNDVVARAQWYKSNMGF.

The segment covering 1 to 10 (MPYGKIEDIK) has biased composition (basic and acidic residues). Positions 1–31 (MPYGKIEDIKTSGASDVTAAQDGLKEGGWKS) are disordered. Catalysis depends on residues glutamate 71 and aspartate 84.

The protein belongs to the glycosyl hydrolase 23 family.

The enzyme catalyses Hydrolysis of (1-&gt;4)-beta-linkages between N-acetylmuramic acid and N-acetyl-D-glucosamine residues in a peptidoglycan and between N-acetyl-D-glucosamine residues in chitodextrins.. This chain is Lysozyme g, found in Takifugu rubripes (Japanese pufferfish).